Reading from the N-terminus, the 546-residue chain is Nuclear pore complex protein Nup58 (546 aa).

Repeat copies occupy residues Phe22–Gly23, Phe36–Gly37, Phe45–Gly46, Phe64–Gly65, Phe73–Gly74, Phe82–Gly83, Phe92–Gly93, Phe101–Gly102, Phe110–Gly111, Phe119–Gly120, Phe128–Gly129, Phe137–Gly138, Phe146–Gly147, Phe155–Gly156, Phe166–Gly167, Phe197–Gly198, and Phe199–Gly200. A 17 X 2 AA repeats of F-G region spans residues Phe22–Gly200.

This sequence belongs to the NUP58 family. As to quaternary structure, component of the nuclear pore complex. Interacts with Nup54. Interacts (via C-terminus) with fs(1)Yb; this interaction occurs in a RNA-independent manner. Interacts with sbr/nxf1. Interacts with Nxt1. In terms of processing, O-glycosylated; contains O-GlcNAc. O-GlcNAcylation increases with increasing ambient temperature.

The protein resides in the nucleus. The protein localises to the nuclear pore complex. Its function is as follows. Component of the nuclear pore complex, a complex required for the trafficking across the nuclear membrane. Together with Nup54, required for transposable element silencing regulation in ovarian follicle cells. By interacting with the nuclear (Nxf1/Nxt1) and cytosolic (fs(1)Yb) components of the flamenco (flam) transcripts processing pathway, enables export and subsequent piRNA production. This is Nuclear pore complex protein Nup58 from Drosophila melanogaster (Fruit fly).